The sequence spans 355 residues: Tetraacyldisaccharide 4'-kinase (355 aa).

An ATP-binding site is contributed by 48–55 (SVGGTGKT).

Belongs to the LpxK family.

The catalysed reaction is a lipid A disaccharide + ATP = a lipid IVA + ADP + H(+). It functions in the pathway glycolipid biosynthesis; lipid IV(A) biosynthesis; lipid IV(A) from (3R)-3-hydroxytetradecanoyl-[acyl-carrier-protein] and UDP-N-acetyl-alpha-D-glucosamine: step 6/6. Its function is as follows. Transfers the gamma-phosphate of ATP to the 4'-position of a tetraacyldisaccharide 1-phosphate intermediate (termed DS-1-P) to form tetraacyldisaccharide 1,4'-bis-phosphate (lipid IVA). This chain is Tetraacyldisaccharide 4'-kinase, found in Pelodictyon phaeoclathratiforme (strain DSM 5477 / BU-1).